Consider the following 412-residue polypeptide: Argininosuccinate synthase (412 aa).

Residues 20 to 28 (AYSGGLDTS) and A48 each bind ATP. Residues Y100 and S105 each contribute to the L-citrulline site. G130 is a binding site for ATP. Positions 132, 136, and 137 each coordinate L-aspartate. N136 is a binding site for L-citrulline. Positions 140, 189, 198, 274, and 286 each coordinate L-citrulline.

The protein belongs to the argininosuccinate synthase family. Type 1 subfamily. As to quaternary structure, homotetramer.

Its subcellular location is the cytoplasm. It catalyses the reaction L-citrulline + L-aspartate + ATP = 2-(N(omega)-L-arginino)succinate + AMP + diphosphate + H(+). Its pathway is amino-acid biosynthesis; L-arginine biosynthesis; L-arginine from L-ornithine and carbamoyl phosphate: step 2/3. In Shewanella pealeana (strain ATCC 700345 / ANG-SQ1), this protein is Argininosuccinate synthase.